The primary structure comprises 445 residues: MAKDLQVTTSKVNDNQTQLTVKVPVEQIQNKVEGRIRNVAKTAKIDGFRKGKVPVSHIRAQYGAGIQQEVINDVIRDTVFEAIKAEDVRAVGMPNIDDVKLEDEFLVYQATVEIFPEIKVEGMSDIEVERHTATITDEDVDTMIENLRKQRQEFAEKEGAADEGDQVTFDFEGSIDGEKFEGGSAEDFKLVLGSGQMIPGFEDGIKGLAAGEEKTIDVTFPEDYQAENLAGKEAQFKINVKKVEEAKLPEINDEFLELFGVKEGGVEQLKTDVRKNMTREIKNAARNQVKQAAFDALLEKNEFDVPSAMVDQEVDRQRNLMMQRFAQQFGGNANSIDKDMLPRELFEEQAIRAARLGVLVSRVIEENDLKVDQERVETFIKETAENYEDPQEVIEYYTNDAQQRANIESVVLEDQVVDFLLEQGKVTDKEVGYQELLASQQQGMM.

One can recognise a PPIase FKBP-type domain in the interval 164-249 (GDQVTFDFEG…VKKVEEAKLP (86 aa)).

Belongs to the FKBP-type PPIase family. Tig subfamily.

It localises to the cytoplasm. It catalyses the reaction [protein]-peptidylproline (omega=180) = [protein]-peptidylproline (omega=0). Involved in protein export. Acts as a chaperone by maintaining the newly synthesized protein in an open conformation. Functions as a peptidyl-prolyl cis-trans isomerase. The protein is Trigger factor of Psychrobacter sp. (strain PRwf-1).